The chain runs to 124 residues: Putative membrane protein insertion efficiency factor (124 aa).

The segment covering methionine 1 to threonine 12 has biased composition (basic and acidic residues). The interval methionine 1–glycine 26 is disordered.

The protein belongs to the UPF0161 family.

It localises to the cell inner membrane. Its function is as follows. Could be involved in insertion of integral membrane proteins into the membrane. This chain is Putative membrane protein insertion efficiency factor, found in Rhizobium meliloti (strain 1021) (Ensifer meliloti).